The primary structure comprises 257 residues: Lipid A 4'-phosphatase (257 aa).

6 helical membrane-spanning segments follow: residues 21–41, 85–105, 119–139, 174–194, 201–221, and 225–245; these read FGAF…FRAF, IFFR…IECY, KLKV…NVIL, CSFV…LLFV, ALVP…LSFG, and LSDV…LLAL.

It belongs to the lipid A LpxF 4'-phosphatase family.

It is found in the cell inner membrane. Its pathway is bacterial outer membrane biogenesis; LPS lipid A biosynthesis. Its function is as follows. Probably removes the 4'-phosphate moiety from lipid A species. Not seen to act on other membrane components, nor does it dephosphorylate the 1-phosphate group of lipid A and/or lipid A precursors. This Rhizobium etli (strain ATCC 51251 / DSM 11541 / JCM 21823 / NBRC 15573 / CFN 42) protein is Lipid A 4'-phosphatase.